The sequence spans 244 residues: Ureidoacrylate amidohydrolase RutB (244 aa).

Asp-38 acts as the Proton acceptor in catalysis. Residue Lys-147 is part of the active site. Cys-180 functions as the Nucleophile in the catalytic mechanism.

Belongs to the isochorismatase family. RutB subfamily.

It catalyses the reaction (Z)-3-ureidoacrylate + H2O + H(+) = (Z)-3-aminoacrylate + NH4(+) + CO2. The catalysed reaction is (Z)-3-ureidoacrylate + H2O = (Z)-3-aminoacrylate + carbamate + H(+). The enzyme catalyses (Z)-2-methylureidoacrylate + H2O + H(+) = (Z)-2-methylaminoacrylate + NH4(+) + CO2. In terms of biological role, hydrolyzes ureidoacrylate to form aminoacrylate and carbamate. The carbamate hydrolyzes spontaneously, thereby releasing one of the nitrogen atoms of the pyrimidine ring as ammonia and one of its carbon atoms as CO2. The polypeptide is Ureidoacrylate amidohydrolase RutB (Escherichia coli O55:H7 (strain CB9615 / EPEC)).